A 405-amino-acid chain; its full sequence is Alpha-N-acetylgalactosaminidase (405 aa).

3 disulfides stabilise this stretch: cysteine 21-cysteine 63, cysteine 25-cysteine 32, and cysteine 111-cysteine 142. Substrate is bound by residues 61 to 62 (DD) and lysine 138. The active-site Nucleophile is aspartate 140. Asparagine 161 is a glycosylation site (N-linked (GlcNAc...) asparagine). An intrachain disulfide couples cysteine 171 to cysteine 193. Serine 172 contributes to the substrate binding site. Asparagine 185 carries an N-linked (GlcNAc...) asparagine glycan. Arginine 197 and aspartate 201 together coordinate substrate. The active-site Proton donor is aspartate 201. Asparagine 369 carries an N-linked (GlcNAc...) asparagine glycan.

This sequence belongs to the glycosyl hydrolase 27 family. As to quaternary structure, homodimer.

It is found in the lysosome. It catalyses the reaction Cleavage of non-reducing alpha-(1-&gt;3)-N-acetylgalactosamine residues from human blood group A and AB mucin glycoproteins, Forssman hapten and blood group A lacto series glycolipids.. The enzyme catalyses a neolactoside IV(3)-alpha-GalNAc,IV(2)-alpha-Fuc-nLc4Cer(d18:1(4E)) + H2O = a neolactoside IV(2)-alpha-Fuc-nLc4Cer(d18:1(4E)) + N-acetyl-alpha-D-galactosamine. The catalysed reaction is a neolactoside IV(3)-alpha-GalNAc,IV(2)-alpha-Fuc-nLc4Cer(d18:0) + H2O = a neolactoside IV(2)-alpha-Fuc-nLc4Cer(d18:0) + N-acetyl-alpha-D-galactosamine. It carries out the reaction a globoside IV3GalNAc-Gb4Cer + H2O = N-acetyl-alpha-D-galactosamine + a globoside Gb4Cer. Removes terminal alpha-N-acetylgalactosamine residues from glycolipids and glycopeptides. Required for the breakdown of glycolipids. This Gallus gallus (Chicken) protein is Alpha-N-acetylgalactosaminidase (NAGA).